Reading from the N-terminus, the 176-residue chain is Large ribosomal subunit protein uL10 (176 aa).

Belongs to the universal ribosomal protein uL10 family. As to quaternary structure, part of the ribosomal stalk of the 50S ribosomal subunit. The N-terminus interacts with L11 and the large rRNA to form the base of the stalk. The C-terminus forms an elongated spine to which L12 dimers bind in a sequential fashion forming a multimeric L10(L12)X complex.

Functionally, forms part of the ribosomal stalk, playing a central role in the interaction of the ribosome with GTP-bound translation factors. In Thioalkalivibrio sulfidiphilus (strain HL-EbGR7), this protein is Large ribosomal subunit protein uL10.